The sequence spans 144 residues: D-aminoacyl-tRNA deacylase (144 aa).

The Gly-cisPro motif, important for rejection of L-amino acids motif lies at 136–137 (GP).

It belongs to the DTD family. In terms of assembly, homodimer.

Its subcellular location is the cytoplasm. The catalysed reaction is glycyl-tRNA(Ala) + H2O = tRNA(Ala) + glycine + H(+). It catalyses the reaction a D-aminoacyl-tRNA + H2O = a tRNA + a D-alpha-amino acid + H(+). Its function is as follows. An aminoacyl-tRNA editing enzyme that deacylates mischarged D-aminoacyl-tRNAs. Also deacylates mischarged glycyl-tRNA(Ala), protecting cells against glycine mischarging by AlaRS. Acts via tRNA-based rather than protein-based catalysis; rejects L-amino acids rather than detecting D-amino acids in the active site. By recycling D-aminoacyl-tRNA to D-amino acids and free tRNA molecules, this enzyme counteracts the toxicity associated with the formation of D-aminoacyl-tRNA entities in vivo and helps enforce protein L-homochirality. In Mannheimia succiniciproducens (strain KCTC 0769BP / MBEL55E), this protein is D-aminoacyl-tRNA deacylase.